Here is a 145-residue protein sequence, read N- to C-terminus: Cell division protein SepF (145 aa).

Belongs to the SepF family. Homodimer. Interacts with FtsZ.

The protein localises to the cytoplasm. Its function is as follows. Cell division protein that is part of the divisome complex and is recruited early to the Z-ring. Probably stimulates Z-ring formation, perhaps through the cross-linking of FtsZ protofilaments. Its function overlaps with FtsA. This is Cell division protein SepF from Lactobacillus acidophilus (strain ATCC 700396 / NCK56 / N2 / NCFM).